A 438-amino-acid chain; its full sequence is tRNA(Ile)-lysidine synthase (438 aa).

19 to 24 (SGGIDS) contributes to the ATP binding site.

It belongs to the tRNA(Ile)-lysidine synthase family.

The protein localises to the cytoplasm. It catalyses the reaction cytidine(34) in tRNA(Ile2) + L-lysine + ATP = lysidine(34) in tRNA(Ile2) + AMP + diphosphate + H(+). Functionally, ligates lysine onto the cytidine present at position 34 of the AUA codon-specific tRNA(Ile) that contains the anticodon CAU, in an ATP-dependent manner. Cytidine is converted to lysidine, thus changing the amino acid specificity of the tRNA from methionine to isoleucine. The chain is tRNA(Ile)-lysidine synthase from Buchnera aphidicola subsp. Baizongia pistaciae (strain Bp).